A 552-amino-acid polypeptide reads, in one-letter code: 4-coumarate--CoA ligase-like 4 (552 aa).

Residues 182–205 (ISATTPDPARRKDRVTQDDPATLL) are disordered. Residues 189–198 (PARRKDRVTQ) are compositionally biased toward basic and acidic residues. Residues Ser207, Ser208, Gly209, Thr210, Thr211, and Lys215 each coordinate ATP. Tyr256 contacts (E)-4-coumaroyl-AMP. Residue Lys277 coordinates CoA. Residues 279 to 346 (ELPEMLRSIN…EKYPQVEILQ (68 aa)) are SBD1. 4 residues coordinate (E)-4-coumaroyl-AMP: Gly324, Gln346, Gly347, and Thr351. Positions 346, 347, 351, 432, and 447 each coordinate ATP. The interval 347 to 411 (GYGLTESTAI…IRGPYVMKGY (65 aa)) is SBD2. (E)-4-coumaroyl-AMP is bound by residues Lys449 and Lys453. Residues Lys455 and Gly456 each coordinate CoA. Position 538 (Lys538) interacts with ATP.

It belongs to the ATP-dependent AMP-binding enzyme family. The cofactor is Mg(2+).

The catalysed reaction is (E)-4-coumarate + ATP + CoA = (E)-4-coumaroyl-CoA + AMP + diphosphate. The enzyme catalyses (E)-4-coumarate + ATP + H(+) = (E)-4-coumaroyl-AMP + diphosphate. It carries out the reaction (E)-4-coumaroyl-AMP + CoA = (E)-4-coumaroyl-CoA + AMP + H(+). Carboxylate--CoA ligase that may use 4-coumarate as substrate. Follows a two-step reaction mechanism, wherein the carboxylate substrate first undergoes adenylation by ATP, followed by a thioesterification in the presence of CoA to yield the final CoA thioester. In Oryza sativa subsp. japonica (Rice), this protein is 4-coumarate--CoA ligase-like 4 (4CLL4).